A 166-amino-acid polypeptide reads, in one-letter code: Myeloid-derived growth factor (166 aa).

The signal sequence occupies residues 1–24; it reads MAAPSGGFWTAVVLAAAALKLAAA.

The protein belongs to the MYDGF family. Expressed in prostate, spleen and lung, and weakly expressed in the left ventricle (LF) and liver. Expressed predominantly in inflammatory cells, such as monocytes and macrophages, and weakly expressed in neutrophils, T-cells, B-cells, endothelial cells and cardiac myocytes, after myocardial infarction (MI) (at protein level).

The protein resides in the secreted. It is found in the endoplasmic reticulum-Golgi intermediate compartment. Its subcellular location is the endoplasmic reticulum. The protein localises to the golgi apparatus. In terms of biological role, bone marrow-derived monocyte and paracrine-acting protein that promotes cardiac myocyte survival and adaptive angiogenesis for cardiac protection and/or repair after myocardial infarction (MI). Stimulates endothelial cell proliferation through a MAPK1/3-, STAT3- and CCND1-mediated signaling pathway. Inhibits cardiac myocyte apoptosis in a PI3K/AKT-dependent signaling pathway. This Mus musculus (Mouse) protein is Myeloid-derived growth factor.